The primary structure comprises 311 residues: Methionyl-tRNA formyltransferase (311 aa).

Position 112-115 (112-115 (SLLP)) interacts with (6S)-5,6,7,8-tetrahydrofolate.

The protein belongs to the Fmt family.

The catalysed reaction is L-methionyl-tRNA(fMet) + (6R)-10-formyltetrahydrofolate = N-formyl-L-methionyl-tRNA(fMet) + (6S)-5,6,7,8-tetrahydrofolate + H(+). Attaches a formyl group to the free amino group of methionyl-tRNA(fMet). The formyl group appears to play a dual role in the initiator identity of N-formylmethionyl-tRNA by promoting its recognition by IF2 and preventing the misappropriation of this tRNA by the elongation apparatus. The sequence is that of Methionyl-tRNA formyltransferase from Bradyrhizobium diazoefficiens (strain JCM 10833 / BCRC 13528 / IAM 13628 / NBRC 14792 / USDA 110).